The primary structure comprises 82 residues: Sec-independent protein translocase protein TatA (82 aa).

A helical transmembrane segment spans residues 1–21 (MLGFGPFELILIVVIIALLFG). Residues 36–47 (IKEFKQEMHEPS) show a composition bias toward basic and acidic residues. The segment at 36 to 82 (IKEFKQEMHEPSPPRPQVTDIPSQRLDPVTGAPVSTESTVPASDRRS) is disordered.

Belongs to the TatA/E family. Forms a complex with TatC.

It localises to the cell membrane. Its function is as follows. Part of the twin-arginine translocation (Tat) system that transports large folded proteins containing a characteristic twin-arginine motif in their signal peptide across membranes. TatA could form the protein-conducting channel of the Tat system. The sequence is that of Sec-independent protein translocase protein TatA from Deinococcus deserti (strain DSM 17065 / CIP 109153 / LMG 22923 / VCD115).